The sequence spans 247 residues: Adenosylcobinamide-GDP ribazoletransferase (247 aa).

The next 5 helical transmembrane spans lie at 34–54 (IITF…VFMV), 59–79 (CGAP…TGGF), 113–133 (GGLA…ELAL), 138–158 (ILAS…LLMY), and 194–214 (VLLP…AIFI).

This sequence belongs to the CobS family. The cofactor is Mg(2+).

The protein localises to the cell inner membrane. It catalyses the reaction alpha-ribazole + adenosylcob(III)inamide-GDP = adenosylcob(III)alamin + GMP + H(+). It carries out the reaction alpha-ribazole 5'-phosphate + adenosylcob(III)inamide-GDP = adenosylcob(III)alamin 5'-phosphate + GMP + H(+). It functions in the pathway cofactor biosynthesis; adenosylcobalamin biosynthesis; adenosylcobalamin from cob(II)yrinate a,c-diamide: step 7/7. Functionally, joins adenosylcobinamide-GDP and alpha-ribazole to generate adenosylcobalamin (Ado-cobalamin). Also synthesizes adenosylcobalamin 5'-phosphate from adenosylcobinamide-GDP and alpha-ribazole 5'-phosphate. The chain is Adenosylcobinamide-GDP ribazoletransferase from Escherichia coli O45:K1 (strain S88 / ExPEC).